Consider the following 306-residue polypeptide: Large ribosomal subunit protein bL19m (306 aa).

The span at 34–43 (ENQEEQKKEA) shows a compositional bias: basic and acidic residues. The disordered stretch occupies residues 34–53 (ENQEEQKKEAPPTTPTSPVN).

It belongs to the bacterial ribosomal protein bL19 family. As to quaternary structure, component of the mitochondrial ribosome large subunit (39S) which comprises a 16S rRNA and about 50 distinct proteins.

It localises to the mitochondrion. This chain is Large ribosomal subunit protein bL19m (mRpL19), found in Drosophila melanogaster (Fruit fly).